The following is a 145-amino-acid chain: Peptide methionine sulfoxide reductase MsrB (145 aa).

The MsrB domain maps to 4–127 (SDELKQRIGE…NSAALKFIPY (124 aa)). Residue Cys116 is the Nucleophile of the active site.

Belongs to the MsrB Met sulfoxide reductase family.

The catalysed reaction is L-methionyl-[protein] + [thioredoxin]-disulfide + H2O = L-methionyl-(R)-S-oxide-[protein] + [thioredoxin]-dithiol. This chain is Peptide methionine sulfoxide reductase MsrB, found in Streptococcus pyogenes serotype M3 (strain ATCC BAA-595 / MGAS315).